Reading from the N-terminus, the 333-residue chain is UPF0284 protein TGAM_0534 (333 aa).

This sequence belongs to the UPF0284 family.

In Thermococcus gammatolerans (strain DSM 15229 / JCM 11827 / EJ3), this protein is UPF0284 protein TGAM_0534.